A 306-amino-acid polypeptide reads, in one-letter code: Glutathione transport system permease protein GsiC (306 aa).

Topologically, residues 1–8 (MLNYVLKR) are cytoplasmic. A helical membrane pass occupies residues 9 to 29 (LLGLIPTLLIVAVLVFLFVHL). The Periplasmic segment spans residues 30–102 (LPGDPARLIA…SRFLPTLWLT (73 aa)). The region spanning 95–292 (FLPTLWLTIT…LEFILINLVV (198 aa)) is the ABC transmembrane type-1 domain. A helical membrane pass occupies residues 103–123 (ITSMIWAVLFGMAIGIAAAVW). The Cytoplasmic segment spans residues 124-134 (RNRWPDRVGMT). The helical transmembrane segment at 135–155 (LAVTGISFPAFALGMLLMQIF) threads the bilayer. Topologically, residues 156–168 (SVDLGWLPTVGAD) are periplasmic. A helical membrane pass occupies residues 169-189 (SWQHYILPSLTLGAAVASVMA). At 190–228 (RFTRSSFVDVLSEDYMRTARAKGVSETWVVLKHGLRNAM) the chain is on the cytoplasmic side. Residues 229–249 (IPVVTMMGLQFGFLLGGSIVV) traverse the membrane as a helical segment. Residues 250–278 (EKVFNWPGLGRLLVDSVDMRDYPVIQAEV) lie on the Periplasmic side of the membrane. The helical transmembrane segment at 279–299 (LLFSLEFILINLVVDVLYAAI) threads the bilayer. At 300 to 306 (NPAIRYK) the chain is on the cytoplasmic side.

It belongs to the binding-protein-dependent transport system permease family. As to quaternary structure, the complex is composed of two ATP-binding proteins (GsiA), two transmembrane proteins (GsiC and GsiD) and a solute-binding protein (GsiB).

It is found in the cell inner membrane. Its function is as follows. Part of the ABC transporter complex GsiABCD involved in glutathione import. Probably responsible for the translocation of the substrate across the membrane. This is Glutathione transport system permease protein GsiC from Salmonella choleraesuis (strain SC-B67).